Here is a 207-residue protein sequence, read N- to C-terminus: Tereporin-Ts1 (207 aa).

The signal sequence occupies residues 1–11 (VIFALVLGNAS). The interval 35–54 (SAGTSLASTILSGLAASGYR) is N-terminal region. The phosphocholine site is built by Gly-111, Ser-129, Pro-131, Tyr-164, and Tyr-165.

This sequence belongs to the actinoporin family. Conoidea subfamily. Octamer or nonamer in membranes. Monomer in the soluble state. In terms of tissue distribution, expressed by the venom duct.

The protein resides in the secreted. Its subcellular location is the nematocyst. It localises to the target cell membrane. Functionally, pore-forming protein that forms pores of around 1 nm and causes cardiac stimulation and cytolysis. The polypeptide is Tereporin-Ts1 (Terebra subulata (Chocolate spotted auger)).